The primary structure comprises 660 residues: tRNA 5-methylaminomethyl-2-thiouridine biosynthesis bifunctional protein MnmC (660 aa).

The interval 1 to 241 is tRNA (mnm(5)s(2)U34)-methyltransferase; sequence MNDHPAQDAF…KREILRGHLQ (241 aa). Positions 268–660 are FAD-dependent cmnm(5)s(2)U34 oxidoreductase; sequence IGAGLAGCAT…FLLRKLIRGT (393 aa).

It in the N-terminal section; belongs to the methyltransferase superfamily. tRNA (mnm(5)s(2)U34)-methyltransferase family. This sequence in the C-terminal section; belongs to the DAO family. FAD serves as cofactor.

It is found in the cytoplasm. The enzyme catalyses 5-aminomethyl-2-thiouridine(34) in tRNA + S-adenosyl-L-methionine = 5-methylaminomethyl-2-thiouridine(34) in tRNA + S-adenosyl-L-homocysteine + H(+). Functionally, catalyzes the last two steps in the biosynthesis of 5-methylaminomethyl-2-thiouridine (mnm(5)s(2)U) at the wobble position (U34) in tRNA. Catalyzes the FAD-dependent demodification of cmnm(5)s(2)U34 to nm(5)s(2)U34, followed by the transfer of a methyl group from S-adenosyl-L-methionine to nm(5)s(2)U34, to form mnm(5)s(2)U34. The sequence is that of tRNA 5-methylaminomethyl-2-thiouridine biosynthesis bifunctional protein MnmC from Stutzerimonas stutzeri (strain A1501) (Pseudomonas stutzeri).